The following is a 476-amino-acid chain: Ribulose bisphosphate carboxylase large chain (476 aa).

Residues Asn116 and Thr166 each coordinate substrate. The active-site Proton acceptor is the Lys168. Substrate is bound at residue Lys170. Mg(2+) is bound by residues Lys194, Asp196, and Glu197. Lys194 bears the N6-carboxylysine mark. The active-site Proton acceptor is the His286. The substrate site is built by Arg287, His319, and Ser371.

It belongs to the RuBisCO large chain family. Type I subfamily. As to quaternary structure, heterohexadecamer of 8 large chains and 8 small chains. Mg(2+) is required as a cofactor.

The enzyme catalyses 2 (2R)-3-phosphoglycerate + 2 H(+) = D-ribulose 1,5-bisphosphate + CO2 + H2O. It carries out the reaction D-ribulose 1,5-bisphosphate + O2 = 2-phosphoglycolate + (2R)-3-phosphoglycerate + 2 H(+). RuBisCO catalyzes two reactions: the carboxylation of D-ribulose 1,5-bisphosphate, the primary event in carbon dioxide fixation, as well as the oxidative fragmentation of the pentose substrate. Both reactions occur simultaneously and in competition at the same active site. This chain is Ribulose bisphosphate carboxylase large chain, found in Pseudonocardia dioxanivorans (strain ATCC 55486 / DSM 44775 / JCM 13855 / CB1190).